The sequence spans 444 residues: MSAAEEDLIDYSDEELATTEAPAPAAGANGGVKGDSGNLTVSGNAAAAKKGSYVGIHSTGFREFLLKPELLRAISWCGFEHPSEVQQVCIPQAILGTDVLCQAKSGLGKTAVFVLTTLQQVEVVAGETSVLVMCHTRELAYQIRNEYQRFCHFMPDVKIGVFYGGVPISKDVEVLKNPETHPHIIVGTPGRLNALVRDKYLRLNSVKVFVLDECDKMLDQIDMRRDVQEIFRATPPQKQVMMFSATLSQEVRPICKKFMQNPLEIYIDNETKLTLYGLQQYYIKLEEREKNRRLNELLDELSFNQVIIFVKSTVRATELDKLLRECNFPSVAIHSGVSQEERIKRFNDFKDFNKRICVATDVFGRGIDVNKINLAINYDLPPDADSYLHRVGRAGRFGTKGLAISFVSNEADQEVLKAVEKRFEVALPEYPEGGVDSAAYTKTD.

Residues 59-87 carry the Q motif motif; it reads TGFREFLLKPELLRAISWCGFEHPSEVQQ. The Helicase ATP-binding domain occupies 90 to 265; that stretch reads IPQAILGTDV…KKFMQNPLEI (176 aa). ATP is bound at residue 103 to 110; sequence AKSGLGKT. Positions 212-215 match the DECD box motif; that stretch reads DECD. Residues 277-438 form the Helicase C-terminal domain; sequence GLQQYYIKLE…EYPEGGVDSA (162 aa).

It belongs to the DEAD box helicase family. DECD subfamily.

The protein localises to the nucleus. It carries out the reaction ATP + H2O = ADP + phosphate + H(+). Functionally, ATP-binding RNA helicase involved in transcription elongation and required for the export of mRNA out of the nucleus. SUB2 also plays a role in pre-mRNA splicing and spliceosome assembly. May be involved in rDNA and telomeric silencing, and maintenance of genome integrity. The sequence is that of ATP-dependent RNA helicase sub2 (sub2) from Sclerotinia sclerotiorum (strain ATCC 18683 / 1980 / Ss-1) (White mold).